The sequence spans 364 residues: N-acetyl-gamma-glutamyl-phosphate reductase (364 aa).

Cys157 is an active-site residue.

This sequence belongs to the NAGSA dehydrogenase family. Type 1 subfamily.

It is found in the cytoplasm. It catalyses the reaction N-acetyl-L-glutamate 5-semialdehyde + phosphate + NADP(+) = N-acetyl-L-glutamyl 5-phosphate + NADPH + H(+). The protein operates within amino-acid biosynthesis; L-arginine biosynthesis; N(2)-acetyl-L-ornithine from L-glutamate: step 3/4. Functionally, catalyzes the NADPH-dependent reduction of N-acetyl-5-glutamyl phosphate to yield N-acetyl-L-glutamate 5-semialdehyde. This Bifidobacterium longum (strain DJO10A) protein is N-acetyl-gamma-glutamyl-phosphate reductase.